The primary structure comprises 373 residues: WAT1-related protein At4g08300 (373 aa).

The next 10 helical transmembrane spans lie at 11 to 31, 41 to 61, 67 to 87, 102 to 122, 139 to 159, 185 to 205, 219 to 239, 255 to 275, 281 to 301, and 306 to 326; these read PIIAIISLQFGYAGMYIITMV, ILATYRHVVATIVIAPFALIL, PKMTWPLFLRILALGFLEPLL, TYSSAFVNALPAITFIMAVIF, IGTAITVGGAMVMTLYKGPAI, WVTGTLAVMGSITTWAGFFIL, LVMWICAMGTVLNTIASLIMV, AAVYSGVVCSGMAYYIQSIVI, VFTTSFSPMCMIITAFLGVLV, and IHLGSIIGAIFIVFGLYSVVW. EamA domains lie at 23-151 and 198-325; these read AGMY…AMVM and TWAG…YSVV.

This sequence belongs to the drug/metabolite transporter (DMT) superfamily. Plant drug/metabolite exporter (P-DME) (TC 2.A.7.4) family.

Its subcellular location is the membrane. The protein is WAT1-related protein At4g08300 of Arabidopsis thaliana (Mouse-ear cress).